The sequence spans 164 residues: MAKNSNKVRKNTNKENNFKRLAENRYAKFQYAISETIEAGIELLGTEVKSIRNGKANLRDGYCSFRDGEILLLNVHISPHKNVGSFFNHDPLRNRKLLLHKKEIIKLKSNTEKKGMTIVPLSMYLKGSWIKLTLGVGKGKKLHDKRQDEKQKSIKKEINSVLKR.

The tract at residues 143 to 164 (HDKRQDEKQKSIKKEINSVLKR) is disordered. Residues 145 to 158 (KRQDEKQKSIKKEI) show a composition bias toward basic and acidic residues.

Belongs to the SmpB family.

It is found in the cytoplasm. Its function is as follows. Required for rescue of stalled ribosomes mediated by trans-translation. Binds to transfer-messenger RNA (tmRNA), required for stable association of tmRNA with ribosomes. tmRNA and SmpB together mimic tRNA shape, replacing the anticodon stem-loop with SmpB. tmRNA is encoded by the ssrA gene; the 2 termini fold to resemble tRNA(Ala) and it encodes a 'tag peptide', a short internal open reading frame. During trans-translation Ala-aminoacylated tmRNA acts like a tRNA, entering the A-site of stalled ribosomes, displacing the stalled mRNA. The ribosome then switches to translate the ORF on the tmRNA; the nascent peptide is terminated with the 'tag peptide' encoded by the tmRNA and targeted for degradation. The ribosome is freed to recommence translation, which seems to be the essential function of trans-translation. The polypeptide is SsrA-binding protein (Prochlorococcus marinus (strain MIT 9312)).